The chain runs to 74 residues: ATP synthase subunit 9, mitochondrial (74 aa).

Transmembrane regions (helical) follow at residues 16 to 36 (GLIGAGIGIGVVFGSLIIGVS) and 50 to 70 (ILGFAFSEATGLFALMMAFLL).

It belongs to the ATPase C chain family. As to quaternary structure, F-type ATPases have 2 components, CF(1) - the catalytic core - and CF(0) - the membrane proton channel. CF(1) has five subunits: alpha(3), beta(3), gamma(1), delta(1), epsilon(1). CF(0) has three main subunits: a, b and c.

It is found in the mitochondrion inner membrane. In terms of biological role, mitochondrial membrane ATP synthase (F(1)F(0) ATP synthase or Complex V) produces ATP from ADP in the presence of a proton gradient across the membrane which is generated by electron transport complexes of the respiratory chain. F-type ATPases consist of two structural domains, F(1) - containing the extramembraneous catalytic core and F(0) - containing the membrane proton channel, linked together by a central stalk and a peripheral stalk. During catalysis, ATP synthesis in the catalytic domain of F(1) is coupled via a rotary mechanism of the central stalk subunits to proton translocation. Part of the complex F(0) domain. A homomeric c-ring of probably 10 subunits is part of the complex rotary element. The polypeptide is ATP synthase subunit 9, mitochondrial (atp-9) (Neurospora crassa (strain ATCC 24698 / 74-OR23-1A / CBS 708.71 / DSM 1257 / FGSC 987)).